The chain runs to 181 residues: Adenylate kinase (181 aa).

ATP is bound at residue 7–15; that stretch reads GVAGVGKTT.

This sequence belongs to the archaeal adenylate kinase family.

It localises to the cytoplasm. The catalysed reaction is AMP + ATP = 2 ADP. This is Adenylate kinase (adkA) from Thermoplasma volcanium (strain ATCC 51530 / DSM 4299 / JCM 9571 / NBRC 15438 / GSS1).